The following is a 228-amino-acid chain: Large ribosomal subunit protein bL25 (228 aa).

The disordered stretch occupies residues 1 to 24 (MATVMELKATARPKSGKGAARAER).

This sequence belongs to the bacterial ribosomal protein bL25 family. CTC subfamily. In terms of assembly, part of the 50S ribosomal subunit; part of the 5S rRNA/L5/L18/L25 subcomplex. Contacts the 5S rRNA. Binds to the 5S rRNA independently of L5 and L18.

This is one of the proteins that binds to the 5S RNA in the ribosome where it forms part of the central protuberance. This Nitrobacter winogradskyi (strain ATCC 25391 / DSM 10237 / CIP 104748 / NCIMB 11846 / Nb-255) protein is Large ribosomal subunit protein bL25.